A 261-amino-acid chain; its full sequence is Undecaprenyl-diphosphatase (261 aa).

The next 8 helical transmembrane spans lie at 16–36, 40–60, 82–102, 107–127, 140–160, 183–203, 211–231, and 239–259; these read TEFL…LFGF, GLVF…VYFW, FWFL…LEDI, LRAP…LYLA, IRFG…IPGV, FSFL…MLKM, SFVL…WFLI, and FNIF…IALL.

This sequence belongs to the UppP family.

The protein resides in the cell membrane. The catalysed reaction is di-trans,octa-cis-undecaprenyl diphosphate + H2O = di-trans,octa-cis-undecaprenyl phosphate + phosphate + H(+). Catalyzes the dephosphorylation of undecaprenyl diphosphate (UPP). Confers resistance to bacitracin. This chain is Undecaprenyl-diphosphatase, found in Desulforudis audaxviator (strain MP104C).